Consider the following 761-residue polypeptide: NADP-dependent malic enzyme (761 aa).

The segment at Met-1 to Ala-437 is malic enzyme. Tyr-49 acts as the Proton donor in catalysis. Lys-104 serves as the catalytic Proton acceptor. A divalent metal cation contacts are provided by Glu-146, Asp-147, and Asp-172. NADP(+)-binding positions include Ala-205–Ala-208, Asn-297, and Asn-329. The interval Ser-438–Thr-761 is phosphate acetyltransferase.

It in the N-terminal section; belongs to the malic enzymes family. In the C-terminal section; belongs to the phosphate acetyltransferase and butyryltransferase family. As to quaternary structure, homooctamer. It depends on Mg(2+) as a cofactor. Requires Mn(2+) as cofactor.

It carries out the reaction (S)-malate + NADP(+) = pyruvate + CO2 + NADPH. The catalysed reaction is oxaloacetate + H(+) = pyruvate + CO2. The chain is NADP-dependent malic enzyme (tme) from Rhizobium meliloti (strain 1021) (Ensifer meliloti).